A 164-amino-acid chain; its full sequence is 3-hydroxyacyl-[acyl-carrier-protein] dehydratase FabZ (164 aa).

Residue His-61 is part of the active site.

Belongs to the thioester dehydratase family. FabZ subfamily.

It localises to the cytoplasm. The catalysed reaction is a (3R)-hydroxyacyl-[ACP] = a (2E)-enoyl-[ACP] + H2O. Involved in unsaturated fatty acids biosynthesis. Catalyzes the dehydration of short chain beta-hydroxyacyl-ACPs and long chain saturated and unsaturated beta-hydroxyacyl-ACPs. The sequence is that of 3-hydroxyacyl-[acyl-carrier-protein] dehydratase FabZ from Ralstonia nicotianae (strain ATCC BAA-1114 / GMI1000) (Ralstonia solanacearum).